Reading from the N-terminus, the 169-residue chain is Caltractin (169 aa).

The interval 1–24 is disordered; sequence MSYRKTVVSARRDQKKGRVGGLTE. EF-hand domains lie at 25–60, 61–96, 98–133, and 134–169; these read EQKQ…LGFE, PKKE…KMGE, DSRE…LGEN, and LTDE…TSLF. Positions 38, 40, 42, 44, and 49 each coordinate Ca(2+). Positions 147, 149, 151, 153, and 158 each coordinate Ca(2+).

Belongs to the centrin family.

This calcium-binding protein is found in the basal body complexes (the functional homolog of the centrosome in animal cell). In mitotic cells it is specifically associated with the poles of the mitotic spindles at the sites of the duplicated basal body complexes. This is Caltractin from Dunaliella salina (Green alga).